The following is a 119-amino-acid chain: Small ribosomal subunit protein uS13 (119 aa).

The segment at 90-119 is disordered; sequence IRHRRGLPLRGQRTRSNARTRKGKRKPIRS. Basic residues predominate over residues 91-119; that stretch reads RHRRGLPLRGQRTRSNARTRKGKRKPIRS.

It belongs to the universal ribosomal protein uS13 family. Part of the 30S ribosomal subunit. Forms a loose heterodimer with protein S19. Forms two bridges to the 50S subunit in the 70S ribosome.

Its function is as follows. Located at the top of the head of the 30S subunit, it contacts several helices of the 16S rRNA. In the 70S ribosome it contacts the 23S rRNA (bridge B1a) and protein L5 of the 50S subunit (bridge B1b), connecting the 2 subunits; these bridges are implicated in subunit movement. Contacts the tRNAs in the A and P-sites. This Coxiella burnetii (strain CbuK_Q154) (Coxiella burnetii (strain Q154)) protein is Small ribosomal subunit protein uS13.